Reading from the N-terminus, the 313-residue chain is Acetaldehyde dehydrogenase (313 aa).

NAD(+) is bound at residue 13–16 (SGNI). C133 serves as the catalytic Acyl-thioester intermediate. Residues 164–172 (SAGPGTRAN) and N291 each bind NAD(+).

Belongs to the acetaldehyde dehydrogenase family.

It carries out the reaction acetaldehyde + NAD(+) + CoA = acetyl-CoA + NADH + H(+). In Cupriavidus pinatubonensis (strain JMP 134 / LMG 1197) (Cupriavidus necator (strain JMP 134)), this protein is Acetaldehyde dehydrogenase.